Reading from the N-terminus, the 304-residue chain is HTH-type transcriptional activator CmpR (304 aa).

One can recognise an HTH lysR-type domain in the interval 1–61 (MKNATLHQFE…EQIGRKIYLT (61 aa)). Residues 21 to 40 (FTKAAEELFLTQPTVSQQMK) constitute a DNA-binding region (H-T-H motif).

This sequence belongs to the LysR transcriptional regulatory family.

The protein resides in the cytoplasm. Its function is as follows. Activates transcription of the cmpABCD operon under carbon dioxide-limited conditions. Specifically binds to the cmpR-cmpA intergenic region. The protein is HTH-type transcriptional activator CmpR (cmpR) of Synechocystis sp. (strain ATCC 27184 / PCC 6803 / Kazusa).